The following is a 379-amino-acid chain: Homoserine O-succinyltransferase (379 aa).

In terms of domain architecture, AB hydrolase-1 spans 51–360 (NAVLICHALS…DAPQGHDAFL (310 aa)). Residue Ser157 is the Nucleophile of the active site. Arg227 is a substrate binding site. Catalysis depends on residues Asp323 and His356. A substrate-binding site is contributed by Asp357.

It belongs to the AB hydrolase superfamily. MetX family. As to quaternary structure, homodimer.

It localises to the cytoplasm. The catalysed reaction is L-homoserine + succinyl-CoA = O-succinyl-L-homoserine + CoA. It functions in the pathway amino-acid biosynthesis; L-methionine biosynthesis via de novo pathway; O-succinyl-L-homoserine from L-homoserine: step 1/1. In terms of biological role, transfers a succinyl group from succinyl-CoA to L-homoserine, forming succinyl-L-homoserine. The chain is Homoserine O-succinyltransferase from Pseudomonas aeruginosa (strain UCBPP-PA14).